The following is a 170-amino-acid chain: Arginine repressor (170 aa).

The protein belongs to the ArgR family.

It localises to the cytoplasm. Its pathway is amino-acid biosynthesis; L-arginine biosynthesis [regulation]. Its function is as follows. Regulates arginine biosynthesis genes. The protein is Arginine repressor of Bifidobacterium longum (strain DJO10A).